The following is a 235-amino-acid chain: Elongation factor Tu (235 aa).

The tr-type G domain occupies 1–125 (KNMITGAAQM…QVDEYIPAPE (125 aa)). GTP is bound at residue 47-50 (NKQD).

This sequence belongs to the TRAFAC class translation factor GTPase superfamily. Classic translation factor GTPase family. EF-Tu/EF-1A subfamily. In terms of assembly, monomer.

Its subcellular location is the cytoplasm. It carries out the reaction GTP + H2O = GDP + phosphate + H(+). Its function is as follows. GTP hydrolase that promotes the GTP-dependent binding of aminoacyl-tRNA to the A-site of ribosomes during protein biosynthesis. In Leptolyngbya ectocarpi (Phormidium ectocarpi), this protein is Elongation factor Tu (tufA).